Reading from the N-terminus, the 125-residue chain is Large ribosomal subunit protein bL12 (125 aa).

Belongs to the bacterial ribosomal protein bL12 family. As to quaternary structure, homodimer. Part of the ribosomal stalk of the 50S ribosomal subunit. Forms a multimeric L10(L12)X complex, where L10 forms an elongated spine to which 2 to 4 L12 dimers bind in a sequential fashion. Binds GTP-bound translation factors.

Forms part of the ribosomal stalk which helps the ribosome interact with GTP-bound translation factors. Is thus essential for accurate translation. The protein is Large ribosomal subunit protein bL12 of Afipia carboxidovorans (strain ATCC 49405 / DSM 1227 / KCTC 32145 / OM5) (Oligotropha carboxidovorans).